The primary structure comprises 223 residues: Cytidylate kinase (223 aa).

Residue 10–18 (GPASSGKST) coordinates ATP.

The protein belongs to the cytidylate kinase family. Type 1 subfamily.

Its subcellular location is the cytoplasm. The catalysed reaction is CMP + ATP = CDP + ADP. It carries out the reaction dCMP + ATP = dCDP + ADP. In Streptococcus pneumoniae (strain Taiwan19F-14), this protein is Cytidylate kinase.